Here is a 167-residue protein sequence, read N- to C-terminus: Schlafen-like protein (167 aa).

It belongs to the Schlafen family. Subgroup poxviridae B3 subfamily.

The polypeptide is Schlafen-like protein (Bos taurus (Bovine)).